The following is a 158-amino-acid chain: Endoribonuclease YbeY (158 aa).

Zn(2+) is bound by residues His-124, His-128, and His-134.

Belongs to the endoribonuclease YbeY family. Zn(2+) is required as a cofactor.

Its subcellular location is the cytoplasm. Its function is as follows. Single strand-specific metallo-endoribonuclease involved in late-stage 70S ribosome quality control and in maturation of the 3' terminus of the 16S rRNA. The chain is Endoribonuclease YbeY from Caldanaerobacter subterraneus subsp. tengcongensis (strain DSM 15242 / JCM 11007 / NBRC 100824 / MB4) (Thermoanaerobacter tengcongensis).